We begin with the raw amino-acid sequence, 549 residues long: E-selectin (549 aa).

The signal sequence occupies residues methionine 1–alanine 21. The C-type lectin domain occupies tryptophan 22 to tyrosine 139. Residues tryptophan 22–proline 494 are Extracellular-facing. Residues asparagine 25 and asparagine 60 are each glycosylated (N-linked (GlcNAc...) asparagine). Intrachain disulfides connect cysteine 40/cysteine 138, cysteine 111/cysteine 130, cysteine 143/cysteine 154, cysteine 148/cysteine 163, cysteine 165/cysteine 174, cysteine 180/cysteine 225, cysteine 193/cysteine 206, cysteine 210/cysteine 238, cysteine 243/cysteine 287, cysteine 256/cysteine 269, cysteine 273/cysteine 300, cysteine 305/cysteine 350, cysteine 336/cysteine 363, cysteine 368/cysteine 413, cysteine 399/cysteine 426, cysteine 431/cysteine 472, and cysteine 458/cysteine 485. Residues glutamate 101, asparagine 103, and glutamate 109 each contribute to the Ca(2+) site. Residues glutamate 101–glutamate 109, glutamate 113–arginine 118, and asparagine 126–glutamate 128 each bind a carbohydrate. Ca(2+)-binding residues include asparagine 126 and aspartate 127. One can recognise an EGF-like domain in the interval threonine 140–aspartate 175. Asparagine 145 carries an N-linked (GlcNAc...) asparagine glycan. Sushi domains lie at valine 178–valine 240, valine 241–alanine 302, valine 303–alanine 365, serine 366–glycine 428, and valine 429–alanine 487. N-linked (GlcNAc...) asparagine glycosylation is found at asparagine 192 and asparagine 203. N-linked (GlcNAc...) asparagine glycosylation occurs at asparagine 266. Residues asparagine 313, asparagine 320, and asparagine 333 are each glycosylated (N-linked (GlcNAc...) asparagine). 2 N-linked (GlcNAc...) asparagine glycosylation sites follow: asparagine 441 and asparagine 465. A helical membrane pass occupies residues leucine 495–leucine 516. Topologically, residues lysine 517 to isoleucine 549 are cytoplasmic.

It belongs to the selectin/LECAM family. In terms of assembly, interacts with SELPLG/PSGL1 and PODXL2 through the sialyl Lewis X epitope. SELPLG sulfation appears not to be required for this interaction.

The protein resides in the cell membrane. Its function is as follows. Cell-surface glycoprotein having a role in immunoadhesion. Mediates in the adhesion of blood neutrophils in cytokine-activated endothelium through interaction with SELPLG/PSGL1. May have a role in capillary morphogenesis. In Rattus norvegicus (Rat), this protein is E-selectin (Sele).